The primary structure comprises 615 residues: Dihydroxy-acid dehydratase (615 aa).

Residue Asp-81 participates in Mg(2+) binding. [2Fe-2S] cluster is bound at residue Cys-122. Mg(2+) is bound by residues Asp-123 and Lys-124. Position 124 is an N6-carboxylysine (Lys-124). Cys-197 serves as a coordination point for [2Fe-2S] cluster. Glu-494 lines the Mg(2+) pocket. Catalysis depends on Ser-520, which acts as the Proton acceptor.

Belongs to the IlvD/Edd family. In terms of assembly, homodimer. [2Fe-2S] cluster is required as a cofactor. The cofactor is Mg(2+).

The catalysed reaction is (2R)-2,3-dihydroxy-3-methylbutanoate = 3-methyl-2-oxobutanoate + H2O. It carries out the reaction (2R,3R)-2,3-dihydroxy-3-methylpentanoate = (S)-3-methyl-2-oxopentanoate + H2O. It participates in amino-acid biosynthesis; L-isoleucine biosynthesis; L-isoleucine from 2-oxobutanoate: step 3/4. It functions in the pathway amino-acid biosynthesis; L-valine biosynthesis; L-valine from pyruvate: step 3/4. Functionally, functions in the biosynthesis of branched-chain amino acids. Catalyzes the dehydration of (2R,3R)-2,3-dihydroxy-3-methylpentanoate (2,3-dihydroxy-3-methylvalerate) into 2-oxo-3-methylpentanoate (2-oxo-3-methylvalerate) and of (2R)-2,3-dihydroxy-3-methylbutanoate (2,3-dihydroxyisovalerate) into 2-oxo-3-methylbutanoate (2-oxoisovalerate), the penultimate precursor to L-isoleucine and L-valine, respectively. The chain is Dihydroxy-acid dehydratase from Salinispora arenicola (strain CNS-205).